Consider the following 346-residue polypeptide: Low specificity L-threonine aldolase (346 aa).

At Lys-207 the chain carries N6-(pyridoxal phosphate)lysine.

This sequence belongs to the threonine aldolase family. In terms of assembly, homotetramer. Pyridoxal 5'-phosphate is required as a cofactor.

It carries out the reaction L-threonine = acetaldehyde + glycine. The enzyme catalyses L-allo-threonine = acetaldehyde + glycine. Catalyzes the cleavage of L-allo-threonine and L-threonine to glycine and acetaldehyde. Can also act on L-erythro-phenylserine, L-threo-phenylserine, L-beta-3,4-methylenedioxyphenylserine and L-beta-3,4-dihydroxyphenylserine. This Pseudomonas sp. (strain NCIMB 10558) protein is Low specificity L-threonine aldolase (ltaE).